The sequence spans 264 residues: Phosphatidylinositol transfer protein 1 (264 aa).

Residues 151-174 (NYKETEDPTKIRSEKANRGPLEEE) form a disordered region. Residues 238–264 (VRAFELKTKEDLKKKLEEKDENKAAEK) are a coiled coil.

This sequence belongs to the PtdIns transfer protein family. PI transfer class I subfamily. Post-translationally, phosphorylated in response to activation of rasG.

The protein resides in the cytoplasm. It is found in the golgi apparatus. Its function is as follows. Catalyzes the transfer of PtdIns and phosphatidylcholine between membranes. The protein is Phosphatidylinositol transfer protein 1 (pitA) of Dictyostelium discoideum (Social amoeba).